The sequence spans 306 residues: tRNA-cytidine(32) 2-sulfurtransferase (306 aa).

Residues 44–49 carry the PP-loop motif motif; it reads SGGKDS. Residues C119, C122, and C210 each contribute to the [4Fe-4S] cluster site.

The protein belongs to the TtcA family. In terms of assembly, homodimer. Mg(2+) serves as cofactor. [4Fe-4S] cluster is required as a cofactor.

The protein resides in the cytoplasm. It carries out the reaction cytidine(32) in tRNA + S-sulfanyl-L-cysteinyl-[cysteine desulfurase] + AH2 + ATP = 2-thiocytidine(32) in tRNA + L-cysteinyl-[cysteine desulfurase] + A + AMP + diphosphate + H(+). It participates in tRNA modification. In terms of biological role, catalyzes the ATP-dependent 2-thiolation of cytidine in position 32 of tRNA, to form 2-thiocytidine (s(2)C32). The sulfur atoms are provided by the cysteine/cysteine desulfurase (IscS) system. The chain is tRNA-cytidine(32) 2-sulfurtransferase from Photorhabdus laumondii subsp. laumondii (strain DSM 15139 / CIP 105565 / TT01) (Photorhabdus luminescens subsp. laumondii).